A 433-amino-acid polypeptide reads, in one-letter code: MRRFARVALLFLGCGVCSLLYGVSQLALSLEQEAGGARQRQARESAAPGGGRQAGSADGGEEGAGRCKNLSVSFWNSYWMLPSDVCGVNCFWEAAFRYTYMETQPSETMHLAVVACGERLEETITMLRSAIIFSIKPLHFHIFAEDQLHESFKDILDDFPYEGKVNYTLYPITFPSEGAKEWKKLFKPCASQRLFLPLILKDVDSLLYVDTDILFLRPVDDIWSFLRKFDSTQIAAMAPEHEEPRIGWYNRFARHPYYGVTGINSGVMLMNMTRIRRKYFKNDMTSVRLRWAEILMPLLKKYKLNITWGDQDLLNIMFFHNPESLYVFPCQWNYRPDHCIYGSNCKEAEEEGIFILHGNRGVYHDDKQPTFRAVYEAIKNYSFGDDLVRSLLQPLELELQKTVHTYCGRVYEVFIKQLKKSIKDLSVRRSKGS.

The Cytoplasmic portion of the chain corresponds to 1–6 (MRRFAR). The chain crosses the membrane as a helical; Signal-anchor for type II membrane protein span at residues 7 to 29 (VALLFLGCGVCSLLYGVSQLALS). Residues 30–433 (LEQEAGGARQ…DLSVRRSKGS (404 aa)) are Lumenal-facing. The disordered stretch occupies residues 39–64 (QRQARESAAPGGGRQAGSADGGEEGA). Residues Asn-69, Asn-166, Asn-271, Asn-305, and Asn-380 are each glycosylated (N-linked (GlcNAc...) asparagine).

The protein belongs to the glycosyltransferase 8 family.

The protein localises to the membrane. It carries out the reaction 3-O-(beta-D-glucosyl)-L-seryl-[EGF-like domain protein] + UDP-alpha-D-xylose = 3-O-[alpha-D-xylosyl-(1-&gt;3)-beta-D-glucosyl]-L-seryl-[EGF-like domain protein] + UDP + H(+). Functionally, glycosyltransferase which elongates the O-linked glucose attached to EGF-like repeats in the extracellular domain of Notch proteins by catalyzing the addition of xylose. The protein is Glucoside xylosyltransferase 1 (GXYLT1) of Gallus gallus (Chicken).